The chain runs to 419 residues: MKLYEWLLQRVRKALKKAYEASKEIKTMKQDFSLYKKSDFFDTTSWENSFSYIDFELNKYKWIIKYSLFKYRVSVVFLLFLSPFEISHSKDSLYFNILHNKKIHMQLSWIKKVIDDIETWQKKKRDFFYLQQTKNKQKQKKFHLGILSNIDSIAYETIGFIPRSITRTLYRFKTELTGKTALILFREFRFAKYQALASIQYGFFLLLLPWIVTLLFKKLSLEYLMNVWWNKSSIQLFNASQKKIALKRFQNMEDIFWLDLITKETLENKSQYSISLKIHDMIISLVEIYTQKSIYTIIELITDFIGIFTITVILCIAKKRLTVLNSWLQELFYSLSDTMKAFFILLITDLCIGFHSPHGWEVLIELVWEHFGFVPNQYITSFFVSTFPVVLDTMVKYWIFRHLNRISPSIVVTYHSMNE.

Helical transmembrane passes span 196–216 (LASI…TLLF), 297–317 (IIEL…LCIA), 344–364 (ILLI…EVLI), and 371–391 (FGFV…PVVL).

This sequence belongs to the CemA family.

The protein localises to the plastid. It is found in the chloroplast inner membrane. It catalyses the reaction K(+)(in) + H(+)(out) = K(+)(out) + H(+)(in). In terms of biological role, contributes to K(+)/H(+) antiport activity by supporting proton efflux to control proton extrusion and homeostasis in chloroplasts in a light-dependent manner to modulate photosynthesis. Prevents excessive induction of non-photochemical quenching (NPQ) under continuous-light conditions. Indirectly promotes efficient inorganic carbon uptake into chloroplasts. This chain is Potassium/proton antiporter CemA, found in Chara vulgaris (Common stonewort).